A 482-amino-acid polypeptide reads, in one-letter code: Cilia- and flagella-associated protein 53 (482 aa).

Coiled-coil stretches lie at residues 9 to 40, 67 to 124, and 152 to 413; these read DARIQKMRELEERLANLKADRKVEQKMVAVAE, ADLN…QALA, and IEER…AKDA. Residues 462 to 482 form a disordered region; that stretch reads VNQTLSSTDPPVWHGRRKFDW.

It belongs to the CFAP53 family.

The protein resides in the cell projection. It localises to the cilium. It is found in the flagellum. Its function is as follows. May play a role in filopodium movement. The polypeptide is Cilia- and flagella-associated protein 53 (Chlamydomonas reinhardtii (Chlamydomonas smithii)).